Here is a 440-residue protein sequence, read N- to C-terminus: 3-phosphoshikimate 1-carboxyvinyltransferase (440 aa).

Residues Lys28, Ser29, and Arg33 each contribute to the 3-phosphoshikimate site. Phosphoenolpyruvate is bound at residue Lys28. Phosphoenolpyruvate contacts are provided by Gly98 and Arg126. 3-phosphoshikimate is bound by residues Ser171, Gln173, Asp318, and Lys345. Residue Gln173 coordinates phosphoenolpyruvate. Asp318 serves as the catalytic Proton acceptor. Positions 349 and 391 each coordinate phosphoenolpyruvate.

It belongs to the EPSP synthase family. In terms of assembly, monomer.

The protein resides in the cytoplasm. It catalyses the reaction 3-phosphoshikimate + phosphoenolpyruvate = 5-O-(1-carboxyvinyl)-3-phosphoshikimate + phosphate. It functions in the pathway metabolic intermediate biosynthesis; chorismate biosynthesis; chorismate from D-erythrose 4-phosphate and phosphoenolpyruvate: step 6/7. Its function is as follows. Catalyzes the transfer of the enolpyruvyl moiety of phosphoenolpyruvate (PEP) to the 5-hydroxyl of shikimate-3-phosphate (S3P) to produce enolpyruvyl shikimate-3-phosphate and inorganic phosphate. This is 3-phosphoshikimate 1-carboxyvinyltransferase from Anaeromyxobacter dehalogenans (strain 2CP-C).